The primary structure comprises 678 residues: DNA ligase (678 aa).

NAD(+) contacts are provided by residues 34–38 (DSEYD), 83–84 (SL), and E114. The active-site N6-AMP-lysine intermediate is K116. R137, E176, K293, and K317 together coordinate NAD(+). Residues C411, C414, C429, and C435 each coordinate Zn(2+). The BRCT domain maps to 594–678 (PTRQPLNGES…LMAGYGQTLS (85 aa)).

The protein belongs to the NAD-dependent DNA ligase family. LigA subfamily. Requires Mg(2+) as cofactor. The cofactor is Mn(2+).

It carries out the reaction NAD(+) + (deoxyribonucleotide)n-3'-hydroxyl + 5'-phospho-(deoxyribonucleotide)m = (deoxyribonucleotide)n+m + AMP + beta-nicotinamide D-nucleotide.. DNA ligase that catalyzes the formation of phosphodiester linkages between 5'-phosphoryl and 3'-hydroxyl groups in double-stranded DNA using NAD as a coenzyme and as the energy source for the reaction. It is essential for DNA replication and repair of damaged DNA. The sequence is that of DNA ligase from Acinetobacter baumannii (strain SDF).